Here is a 217-residue protein sequence, read N- to C-terminus: Octanoyltransferase (217 aa).

In terms of domain architecture, BPL/LPL catalytic spans 32 to 207 (SDSPDELWIV…TLSQLLGYQQ (176 aa)). Residues 71 to 78 (RGGQVTYH), 138 to 140 (SLG), and 151 to 153 (GLA) contribute to the substrate site. The active-site Acyl-thioester intermediate is Cys169.

This sequence belongs to the LipB family.

It localises to the cytoplasm. It catalyses the reaction octanoyl-[ACP] + L-lysyl-[protein] = N(6)-octanoyl-L-lysyl-[protein] + holo-[ACP] + H(+). It functions in the pathway protein modification; protein lipoylation via endogenous pathway; protein N(6)-(lipoyl)lysine from octanoyl-[acyl-carrier-protein]: step 1/2. Functionally, catalyzes the transfer of endogenously produced octanoic acid from octanoyl-acyl-carrier-protein onto the lipoyl domains of lipoate-dependent enzymes. Lipoyl-ACP can also act as a substrate although octanoyl-ACP is likely to be the physiological substrate. In Shewanella sp. (strain ANA-3), this protein is Octanoyltransferase.